The primary structure comprises 166 residues: Coiled-coil domain-containing protein 12 (166 aa).

N-acetylmethionine is present on methionine 1. Positions 8–28 (VGRLEEEALRRKERLKALREK) form a coiled coil. The segment covering 21–53 (RLKALREKTGRKDREDGEPQTKQLREEGEEVGK) has biased composition (basic and acidic residues). The interval 21-55 (RLKALREKTGRKDREDGEPQTKQLREEGEEVGKHR) is disordered. N6-acetyllysine is present on lysine 53. Lysine 94 is covalently cross-linked (Glycyl lysine isopeptide (Lys-Gly) (interchain with G-Cter in SUMO2)). Residues 115–144 (DLKRDVAKKLEKLEKRTQRAIAELIRERLK) are a coiled coil. Residues 146–166 (QEDSLASAVDATTGQEACDSD) are disordered. Phosphoserine occurs at positions 149 and 165.

The chain is Coiled-coil domain-containing protein 12 (Ccdc12) from Mus musculus (Mouse).